A 154-amino-acid polypeptide reads, in one-letter code: Prefoldin subunit 2 (154 aa).

Disordered stretches follow at residues 1–20 (MADS…GKGA) and 126–154 (LMGE…VLVS). A compositionally biased stretch (gly residues) spans 9–18 (GKSGGSGAGK). The segment covering 126-139 (LMGEDEKPAAKENS) has biased composition (basic and acidic residues). Positions 140–154 (EGAGAKASSAGVLVS) are enriched in low complexity.

Belongs to the prefoldin subunit beta family. In terms of assembly, heterohexamer of two PFD-alpha type and four PFD-beta type subunits. Component of the PAQosome complex which is responsible for the biogenesis of several protein complexes and which consists of R2TP complex members RUVBL1, RUVBL2, RPAP3 and PIH1D1, URI complex members PFDN2, PFDN6, PDRG1, UXT and URI1 as well as ASDURF, POLR2E and DNAAF10/WDR92. Interacts with URI1; the interaction is phosphorylation-dependent and occurs in a growth-dependent manner.

It localises to the nucleus. The protein resides in the cytoplasm. The protein localises to the mitochondrion. Functionally, binds specifically to cytosolic chaperonin (c-CPN) and transfers target proteins to it. Binds to nascent polypeptide chain and promotes folding in an environment in which there are many competing pathways for nonnative proteins. The chain is Prefoldin subunit 2 (Pfdn2) from Mus musculus (Mouse).